We begin with the raw amino-acid sequence, 268 residues long: Chymotrypsin-C (268 aa).

A signal peptide spans 1-16 (MLGITVLAAILACASS). The propeptide at 17 to 29 (CGDPTFPPNLSAR) is activation peptide. 5 disulfides stabilise this stretch: C17/C141, C59/C75, C155/C222, C186/C202, and C212/C243. An N-linked (GlcNAc...) asparagine glycan is attached at N25. A Peptidase S1 domain is found at 30-267 (VVGGEDAVPN…YIDWIKEKIQ (238 aa)). Residue H74 is the Charge relay system of the active site. N-linked (GlcNAc...) asparagine glycosylation is found at N79 and N90. D121 serves as the catalytic Charge relay system. N182 carries N-linked (GlcNAc...) asparagine glycosylation. S216 (charge relay system) is an active-site residue.

This sequence belongs to the peptidase S1 family. Elastase subfamily.

It catalyses the reaction Preferential cleavage: Leu-|-Xaa, Tyr-|-Xaa, Phe-|-Xaa, Met-|-Xaa, Trp-|-Xaa, Gln-|-Xaa, Asn-|-Xaa.. In terms of biological role, regulates activation and degradation of trypsinogens and procarboxypeptidases by targeting specific cleavage sites within their zymogen precursors. Has chymotrypsin-type protease activity and hypocalcemic activity. Cleaves TRY4 and TRY5 and thereby inhibits their autoactivation. The polypeptide is Chymotrypsin-C (Ctrc) (Mus musculus (Mouse)).